The chain runs to 266 residues: 3-methyl-2-oxobutanoate hydroxymethyltransferase 2 (266 aa).

Mg(2+)-binding residues include D45 and D84. Residues 45–46 (DS), D84, and K112 contribute to the 3-methyl-2-oxobutanoate site. E114 is a binding site for Mg(2+). The active-site Proton acceptor is E181.

The protein belongs to the PanB family. As to quaternary structure, homodecamer; pentamer of dimers. Mg(2+) serves as cofactor.

Its subcellular location is the cytoplasm. It catalyses the reaction 3-methyl-2-oxobutanoate + (6R)-5,10-methylene-5,6,7,8-tetrahydrofolate + H2O = 2-dehydropantoate + (6S)-5,6,7,8-tetrahydrofolate. The protein operates within cofactor biosynthesis; (R)-pantothenate biosynthesis; (R)-pantoate from 3-methyl-2-oxobutanoate: step 1/2. Functionally, catalyzes the reversible reaction in which hydroxymethyl group from 5,10-methylenetetrahydrofolate is transferred onto alpha-ketoisovalerate to form ketopantoate. The chain is 3-methyl-2-oxobutanoate hydroxymethyltransferase 2 from Pseudomonas fluorescens (strain ATCC BAA-477 / NRRL B-23932 / Pf-5).